The sequence spans 233 residues: Snake venom serine protease ussurase (233 aa).

The Peptidase S1 domain maps to 1-224 (VIGGVECNIN…YTDWIQSIIS (224 aa)). 6 disulfide bridges follow: cysteine 7/cysteine 138, cysteine 25/cysteine 41, cysteine 73/cysteine 231, cysteine 117/cysteine 185, cysteine 149/cysteine 164, and cysteine 175/cysteine 200. Histidine 40 serves as the catalytic Charge relay system. Asparagine 54 carries an N-linked (GlcNAc...) asparagine glycan. Aspartate 85 serves as the catalytic Charge relay system. Residue serine 179 is the Charge relay system of the active site.

Belongs to the peptidase S1 family. Snake venom subfamily. As to quaternary structure, monomer. In terms of tissue distribution, expressed by the venom gland.

Its subcellular location is the secreted. Snake venom serine protease that may act in the hemostasis system of the prey. In Gloydius ussuriensis (Ussuri mamushi), this protein is Snake venom serine protease ussurase.